Consider the following 351-residue polypeptide: Ribosomal RNA large subunit methyltransferase M (351 aa).

Residues Ser-186, 219–222 (APGG), Asp-238, Asp-258, and Asp-274 contribute to the S-adenosyl-L-methionine site. Residue Lys-303 is the Proton acceptor of the active site.

This sequence belongs to the class I-like SAM-binding methyltransferase superfamily. RNA methyltransferase RlmE family. RlmM subfamily. Monomer.

Its subcellular location is the cytoplasm. It catalyses the reaction cytidine(2498) in 23S rRNA + S-adenosyl-L-methionine = 2'-O-methylcytidine(2498) in 23S rRNA + S-adenosyl-L-homocysteine + H(+). Its function is as follows. Catalyzes the 2'-O-methylation at nucleotide C2498 in 23S rRNA. The protein is Ribosomal RNA large subunit methyltransferase M of Xylella fastidiosa (strain M12).